The following is a 303-amino-acid chain: tRNA dimethylallyltransferase (303 aa).

12-19 is an ATP binding site; the sequence is GTTASGKS. 14–19 serves as a coordination point for substrate; the sequence is TASGKS. An interaction with substrate tRNA region spans residues 37 to 40; it reads DSRQ.

It belongs to the IPP transferase family. As to quaternary structure, monomer. Mg(2+) serves as cofactor.

It catalyses the reaction adenosine(37) in tRNA + dimethylallyl diphosphate = N(6)-dimethylallyladenosine(37) in tRNA + diphosphate. Its function is as follows. Catalyzes the transfer of a dimethylallyl group onto the adenine at position 37 in tRNAs that read codons beginning with uridine, leading to the formation of N6-(dimethylallyl)adenosine (i(6)A). The protein is tRNA dimethylallyltransferase of Synechocystis sp. (strain ATCC 27184 / PCC 6803 / Kazusa).